Here is a 234-residue protein sequence, read N- to C-terminus: Ponticulin-like protein J (234 aa).

Residues 1-20 (MRLLNNLILMVVLFVAVSNA) form the signal peptide. N19, N143, N166, and N206 each carry an N-linked (GlcNAc...) asparagine glycan. The segment at 115-213 (TIKCGTLPPD…SDNETAEGNN (99 aa)) is disordered. A compositionally biased stretch (low complexity) spans 154–195 (KSTPKSPSTPKTNNSNEDSDLTTSSSDSSSSTKSSPKSKSST). The GPI-like-anchor amidated asparagine moiety is linked to residue N212. An N-linked (GlcNAc...) asparagine glycan is attached at N213. Positions 213-234 (NASSNIATFSLVIISLLVASLF) are cleaved as a propeptide — removed in mature form.

It belongs to the ponticulin family. In terms of processing, the GPI-like-anchor contains a phosphoceramide group, rather than a phosphatidyl group.

It localises to the cell membrane. Its function is as follows. Binds F-actin and nucleates actin assembly. The polypeptide is Ponticulin-like protein J (ponJ) (Dictyostelium discoideum (Social amoeba)).